Here is an 87-residue protein sequence, read N- to C-terminus: Putative regulatory protein syc0519_c (87 aa).

The protein belongs to the RemA family.

The polypeptide is Putative regulatory protein syc0519_c (Synechococcus sp. (strain ATCC 27144 / PCC 6301 / SAUG 1402/1) (Anacystis nidulans)).